The chain runs to 130 residues: Holin-like protein CidA (130 aa).

A run of 4 helical transmembrane segments spans residues 6-26 (FVIK…IGTE), 31-51 (LHIP…LLQF), 65-85 (FLLK…MDVA), and 93-113 (ILFF…SGYI).

Belongs to the CidA/LrgA family. CidA subfamily.

Its subcellular location is the cell membrane. Functionally, increases the activity of extracellular murein hydrolases possibly by mediating their export via hole formation. Inhibited by the antiholin-like proteins LrgAB. In an unstressed cell, the LrgAB products probably inhibit the function of the CidAB proteins. When a cell is stressed by the addition of antibiotics or by other factors in the environment, the CidAB proteins possibly oligomerize within the bacterial cell membrane, creating lesions that disrupt the proton motive force, which in turn results in loss of cell viability. These lesions are also hypothesized to regulate the subsequent cell lysis by either allowing the murein hydrolases access to the cell wall substrate and/or regulating their activity by a possible change in the cell wall pH that results from loss of membrane potential. The chain is Holin-like protein CidA from Staphylococcus epidermidis (strain ATCC 35984 / DSM 28319 / BCRC 17069 / CCUG 31568 / BM 3577 / RP62A).